The following is a 416-amino-acid chain: Tyrosine--tRNA ligase (416 aa).

Y39 provides a ligand contact to L-tyrosine. Positions C44–S53 match the 'HIGH' region motif. L-tyrosine is bound by residues Y176 and Q180. Residues K236–T240 carry the 'KMSKS' region motif. Residue K239 participates in ATP binding. In terms of domain architecture, S4 RNA-binding spans I349–V415.

This sequence belongs to the class-I aminoacyl-tRNA synthetase family. TyrS type 1 subfamily. Homodimer.

The protein resides in the cytoplasm. It catalyses the reaction tRNA(Tyr) + L-tyrosine + ATP = L-tyrosyl-tRNA(Tyr) + AMP + diphosphate + H(+). Catalyzes the attachment of tyrosine to tRNA(Tyr) in a two-step reaction: tyrosine is first activated by ATP to form Tyr-AMP and then transferred to the acceptor end of tRNA(Tyr). The chain is Tyrosine--tRNA ligase from Wolbachia sp. subsp. Brugia malayi (strain TRS).